The sequence spans 56 residues: MSRLFTLVLIVLAMNVMMAIISDPVVEAVGCEECPMHCKGKNAKPTCDDGVCNCNV.

The N-terminal stretch at 1-28 (MSRLFTLVLIVLAMNVMMAIISDPVVEA) is a signal peptide. 3 disulfides stabilise this stretch: cysteine 31–cysteine 47, cysteine 34–cysteine 52, and cysteine 38–cysteine 54.

In terms of tissue distribution, expressed by the venom gland.

Its subcellular location is the secreted. Functionally, blocks small conductance calcium-activated potassium channels (KCNN, SK). Weakly inhibits the Kv7.1/KCNQ1 channel (10 uM of the toxin inhibits currents by 23.3%). Low toxicity by intracerebroventricular injection into mice. The polypeptide is Potassium channel toxin alpha-KTx 9.1 (Olivierus martensii (Manchurian scorpion)).